The following is a 596-amino-acid chain: Probable protein S-acyltransferase 22 (596 aa).

The next 2 helical transmembrane spans lie at 15–35 and 44–64; these read VVAV…FAPF and IAMG…IWCA. Residues 102-125 are disordered; that stretch reads TGGAKSHDGTCVEDTENGSNKKLE. A DHHC domain is found at 163–213; the sequence is FYCSLCEVEVFKYSKHCRVCDKCVDRFDHHCRWLNNCIGKRNYRKFFSLMV. Catalysis depends on Cys193, which acts as the S-palmitoyl cysteine intermediate. Transmembrane regions (helical) follow at residues 215–235 and 254–274; these read AIFL…LCLL and LIPF…ATLP. 3 disordered regions span residues 433-455, 498-523, and 549-596; these read SGRR…RRQS, QTSR…DSHD, and MGQQ…HKSR. Positions 498–518 are enriched in polar residues; sequence QTSRAMSGSGNVMVTSSPESS. Positions 549 to 571 are enriched in low complexity; it reads MGQQRGQQQQQQLSMMMMPLSRS.

It belongs to the DHHC palmitoyltransferase family.

Its subcellular location is the cell membrane. The protein resides in the cytoplasmic vesicle membrane. The catalysed reaction is L-cysteinyl-[protein] + hexadecanoyl-CoA = S-hexadecanoyl-L-cysteinyl-[protein] + CoA. Its function is as follows. Palmitoyl acyltransferase. This Arabidopsis thaliana (Mouse-ear cress) protein is Probable protein S-acyltransferase 22 (PAT22).